A 169-amino-acid polypeptide reads, in one-letter code: Cytochrome c-type biogenesis protein CcmE (169 aa).

Topologically, residues 1-7 (MTRKQRR) are cytoplasmic. Residues 8–28 (MTIIGGSLAVLALAAALVLNA) form a helical; Signal-anchor for type II membrane protein membrane-spanning segment. Topologically, residues 29–169 (LRDSIVFFST…AQGNPQGAVR (141 aa)) are periplasmic. Heme-binding residues include H122 and Y126. The tract at residues 143–169 (DDYGGKASDGVKPAATTAQGNPQGAVR) is disordered. The span at 158–169 (TTAQGNPQGAVR) shows a compositional bias: polar residues.

Belongs to the CcmE/CycJ family.

The protein resides in the cell inner membrane. Its function is as follows. Heme chaperone required for the biogenesis of c-type cytochromes. Transiently binds heme delivered by CcmC and transfers the heme to apo-cytochromes in a process facilitated by CcmF and CcmH. In Bradyrhizobium diazoefficiens (strain JCM 10833 / BCRC 13528 / IAM 13628 / NBRC 14792 / USDA 110), this protein is Cytochrome c-type biogenesis protein CcmE.